A 447-amino-acid chain; its full sequence is MLENIRDAVRKFLTGSTPYEKAVDEFIKDLQKSLISSDVNVKLVFSLTAKIKERLNKEKPPSVLERKEWFISIVYDELSKLFGGDKEPNVNPTKLPFIIMLVGVQGSGKTTTAGKLAYFYKKRGYKVGLVAADVYRPAAYDQLLQLGNQIGVQVYGEPNNQNPIEIAKKGVDIFVKNKMDIIIVDTAGRHGYGEETKLLEEMKEMYDVLKPDDVILVIDASIGQKAYDLASRFHQASPIGSVIITKMDGTAKGGGALSAVVATGATIKFIGTGEKIDELETFNAKRFVSRILGMGDIESILEKVKGLEEYDKIQKKMEDVMEGKGKLTLRDVYAQIIALRKMGPLSKVLQHIPGLGIMLPTPSEDQLKIGEEKIRRWLAALNSMTYKELENPNIIDKSRMRRIAEGSGLEVEEVRELLEWYNNMNRLLKMVKRRRGNIDKLFGGKIG.

GTP contacts are provided by residues glycine 103–threonine 110, aspartate 185–arginine 189, and threonine 245–aspartate 248.

Belongs to the GTP-binding SRP family. SRP54 subfamily. Part of the signal recognition particle protein translocation system, which is composed of SRP and FtsY. Archaeal SRP consists of a 7S RNA molecule of 300 nucleotides and two protein subunits: SRP54 and SRP19.

It localises to the cytoplasm. It catalyses the reaction GTP + H2O = GDP + phosphate + H(+). Its function is as follows. Involved in targeting and insertion of nascent membrane proteins into the cytoplasmic membrane. Binds to the hydrophobic signal sequence of the ribosome-nascent chain (RNC) as it emerges from the ribosomes. The SRP-RNC complex is then targeted to the cytoplasmic membrane where it interacts with the SRP receptor FtsY. This is Signal recognition particle 54 kDa protein from Saccharolobus solfataricus (strain ATCC 35092 / DSM 1617 / JCM 11322 / P2) (Sulfolobus solfataricus).